A 139-amino-acid polypeptide reads, in one-letter code: MAQLTVQIVTPDGLVYDHHASYVSVRTLDGEMGILPRHENMIAVLAVDEVKVKRIDDKDHVNWIAVNGGVIEIANDMITIVADSAERARDIDISRAERAKLRAERAIEEAQDKHLIDQERRAKIALQRAINRINVGNRL.

Belongs to the ATPase epsilon chain family. As to quaternary structure, F-type ATPases have 2 components, CF(1) - the catalytic core - and CF(0) - the membrane proton channel. CF(1) has five subunits: alpha(3), beta(3), gamma(1), delta(1), epsilon(1). CF(0) has three main subunits: a, b and c.

The protein localises to the cell membrane. Functionally, produces ATP from ADP in the presence of a proton gradient across the membrane. This is ATP synthase epsilon chain from Streptococcus pneumoniae serotype 2 (strain D39 / NCTC 7466).